The sequence spans 160 residues: uncharacterized protein (160 aa).

Residues Met-1–Thr-21 form a helical membrane-spanning segment.

Belongs to the IIV-6 203L/325L family.

It is found in the membrane. This is an uncharacterized protein from Invertebrate iridescent virus 6 (IIV-6).